The primary structure comprises 156 residues: Large ribosomal subunit protein uL23 (156 aa).

Residues methionine 1–alanine 19 show a composition bias toward basic and acidic residues. Residues methionine 1 to arginine 67 are disordered. Residue alanine 2 is modified to N,N,N-trimethylalanine. Lysine 14 is covalently cross-linked (Glycyl lysine isopeptide (Lys-Gly) (interchain with G-Cter in SUMO2)). The span at lysine 20 to arginine 67 shows a compositional bias: basic residues. The tract at residues valine 32 to tyrosine 74 is beta-like import receptor binding (BIB) domain. Arginine 41 bears the Citrulline mark. Serine 43 bears the Phosphoserine mark. Threonine 45 carries the post-translational modification Phosphothreonine. N6-acetyllysine is present on lysine 70.

The protein belongs to the universal ribosomal protein uL23 family. Component of the large ribosomal subunit. Interacts with LYAR and GNL2. Interacts with MDM2; this interaction may promote MDM2-mediated p53/TP53 polyubiquitination. Directly interacts (via BIB domain) with IPO5, IPO7, KPNB1 and TNPO1; these interactions are involved in RPL23A nuclear import for the assembly of ribosomal subunits. Interacts with IPO8. N-terminus is methylated by METTL11A/NTM1. Post-translationally, citrullinated by PADI4.

The protein localises to the cytoplasm. The protein resides in the nucleus. Component of the large ribosomal subunit. The ribosome is a large ribonucleoprotein complex responsible for the synthesis of proteins in the cell. Binds a specific region on the 26S rRNA. May promote p53/TP53 degradation possibly through the stimulation of MDM2-mediated TP53 polyubiquitination. This chain is Large ribosomal subunit protein uL23 (RPL23A), found in Oryctolagus cuniculus (Rabbit).